The sequence spans 225 residues: Ribosome maturation factor RimM (225 aa).

The PRC barrel domain maps to 144–225 (ADEFYWVDLI…RIVVDWEADY (82 aa)).

This sequence belongs to the RimM family. As to quaternary structure, binds ribosomal protein uS19.

Its subcellular location is the cytoplasm. An accessory protein needed during the final step in the assembly of 30S ribosomal subunit, possibly for assembly of the head region. Essential for efficient processing of 16S rRNA. May be needed both before and after RbfA during the maturation of 16S rRNA. It has affinity for free ribosomal 30S subunits but not for 70S ribosomes. The sequence is that of Ribosome maturation factor RimM from Burkholderia ambifaria (strain MC40-6).